We begin with the raw amino-acid sequence, 137 residues long: Acidic phospholipase A2 PL-I (137 aa).

An N-terminal signal peptide occupies residues Ala1–Leu17. 7 disulfides stabilise this stretch: Cys28–Cys89, Cys44–Cys136, Cys46–Cys62, Cys61–Cys117, Cys68–Cys110, Cys78–Cys103, and Cys96–Cys108. Positions 45, 47, and 49 each coordinate Ca(2+). Residue His65 is part of the active site. Ca(2+) is bound at residue Asp66. The active site involves Asp111.

It depends on Ca(2+) as a cofactor. As to expression, expressed by the venom gland.

It is found in the secreted. It catalyses the reaction a 1,2-diacyl-sn-glycero-3-phosphocholine + H2O = a 1-acyl-sn-glycero-3-phosphocholine + a fatty acid + H(+). Snake venom phospholipase A2 (PLA2) that may act in the hemostasis system of the prey. Exhibits hydrolytic activities, and prefers the anionic micelles (dPPC with deoxycholate) (793 umol/mg/min) to the zwitterionic micelles (dPPC with Triton X-100) (591 umol/mg/min). PLA2 catalyzes the calcium-dependent hydrolysis of the 2-acyl groups in 3-sn-phosphoglycerides. The polypeptide is Acidic phospholipase A2 PL-I (Walterinnesia aegyptia (Desert black snake)).